Consider the following 657-residue polypeptide: Glycogen debranching enzyme (657 aa).

Catalysis depends on D336, which acts as the Nucleophile. E371 functions as the Proton donor in the catalytic mechanism. Residues 460–479 (ANGEENRDGTNNNYSNNHGK) form a disordered region.

This sequence belongs to the glycosyl hydrolase 13 family.

It catalyses the reaction Hydrolysis of (1-&gt;6)-alpha-D-glucosidic linkages to branches with degrees of polymerization of three or four glucose residues in limit dextrin.. Its pathway is glycan degradation; glycogen degradation. Functionally, removes maltotriose and maltotetraose chains that are attached by 1,6-alpha-linkage to the limit dextrin main chain, generating a debranched limit dextrin. This is Glycogen debranching enzyme from Escherichia coli (strain UTI89 / UPEC).